Consider the following 304-residue polypeptide: Bifunctional protein FolD (304 aa).

NADP(+) is bound by residues 167–169, serine 192, and isoleucine 233; that span reads GRS.

It belongs to the tetrahydrofolate dehydrogenase/cyclohydrolase family. As to quaternary structure, homodimer.

It carries out the reaction (6R)-5,10-methylene-5,6,7,8-tetrahydrofolate + NADP(+) = (6R)-5,10-methenyltetrahydrofolate + NADPH. It catalyses the reaction (6R)-5,10-methenyltetrahydrofolate + H2O = (6R)-10-formyltetrahydrofolate + H(+). It functions in the pathway one-carbon metabolism; tetrahydrofolate interconversion. Functionally, catalyzes the oxidation of 5,10-methylenetetrahydrofolate to 5,10-methenyltetrahydrofolate and then the hydrolysis of 5,10-methenyltetrahydrofolate to 10-formyltetrahydrofolate. The protein is Bifunctional protein FolD of Rhodospirillum centenum (strain ATCC 51521 / SW).